Reading from the N-terminus, the 856-residue chain is Leucine--tRNA ligase (856 aa).

The 'HIGH' region signature appears at 53 to 63 (PYPSGNLHMGH). The 'KMSKS' region motif lies at 622–626 (KMSKS). Lysine 625 contacts ATP.

It belongs to the class-I aminoacyl-tRNA synthetase family.

It localises to the cytoplasm. It catalyses the reaction tRNA(Leu) + L-leucine + ATP = L-leucyl-tRNA(Leu) + AMP + diphosphate. The polypeptide is Leucine--tRNA ligase (Prochlorococcus marinus (strain AS9601)).